Here is a 618-residue protein sequence, read N- to C-terminus: Chaperone protein HscA homolog (618 aa).

This sequence belongs to the heat shock protein 70 family.

In terms of biological role, chaperone involved in the maturation of iron-sulfur cluster-containing proteins. Has a low intrinsic ATPase activity which is markedly stimulated by HscB. This is Chaperone protein HscA homolog from Variovorax paradoxus (strain S110).